A 78-amino-acid polypeptide reads, in one-letter code: Translation initiation factor IF-1, chloroplastic (78 aa).

Residues 1-72 (MKKQKLIDME…TKGRITYRFH (72 aa)) form the S1-like domain.

Belongs to the IF-1 family. As to quaternary structure, component of the 30S ribosomal translation pre-initiation complex which assembles on the 30S ribosome in the order IF-2 and IF-3, IF-1 and N-formylmethionyl-tRNA(fMet); mRNA recruitment can occur at any time during PIC assembly.

The protein resides in the plastid. The protein localises to the chloroplast. In terms of biological role, one of the essential components for the initiation of protein synthesis. Stabilizes the binding of IF-2 and IF-3 on the 30S subunit to which N-formylmethionyl-tRNA(fMet) subsequently binds. Helps modulate mRNA selection, yielding the 30S pre-initiation complex (PIC). Upon addition of the 50S ribosomal subunit IF-1, IF-2 and IF-3 are released leaving the mature 70S translation initiation complex. In Huperzia lucidula (Shining clubmoss), this protein is Translation initiation factor IF-1, chloroplastic.